The following is a 459-amino-acid chain: MAGDESRSNPFSRRTLLRTSAAAGAGLGVAGLSTGYGAAQPVRPAKGESMMGVAFEAHETVRVGIIGVGNRGASMLPLFLAVPGVAITAVCDVSADAVNRAARAVTDAGHPEPAKYSAGEDDFENLLRRDDVDFAYVATPWEWHTPMALSAMRNGKHVGVECPAGTTVDELWELVDTSEKTRRHCIQLENCSYSQNEMRVLRMVHDGLFGQVLFGAGAYLHDLRELLFSKTYYAGQWRRAWHTGLNGDLYPTHGLGPVAAYMDINRGDRLVRITSMSTPAAGLAQYREQHMPAGDPTWNERYVKGDATISLIQTEAGRVVQLAHDVSNPRPYSRLNQLQGTNGVFEDYPARIYLEPTHSNDEWGDFAEFADYDHWLWKEVGPGPGGHGGMDYIMLYRLAQTMRLGLPPDIDVYDSATWSAPFALSVESVRRNSAPVDFPDFTRGRWQTPHPGVDSPKPA.

The tat-type signal signal peptide spans methionine 1–alanine 45. NAD(+) is bound by residues asparagine 70 to arginine 71, aspartate 92, tryptophan 141 to histidine 144, glutamate 161 to cysteine 162, and asparagine 190. Residues tyrosine 219, arginine 238, tyrosine 250–histidine 253, and tyrosine 332 each bind substrate. Tyrosine 250 lines the NAD(+) pocket. Residues aspartate 440–alanine 459 form a disordered region.

This sequence belongs to the Gfo/Idh/MocA family. Glycosyl hydrolase 109 subfamily. NAD(+) is required as a cofactor. Predicted to be exported by the Tat system. The position of the signal peptide cleavage has not been experimentally proven.

In terms of biological role, glycosidase. This is Glycosyl hydrolase family 109 protein from Saccharopolyspora erythraea (strain ATCC 11635 / DSM 40517 / JCM 4748 / NBRC 13426 / NCIMB 8594 / NRRL 2338).